We begin with the raw amino-acid sequence, 154 residues long: Transcriptional repressor NrdR (154 aa).

Residues 3–34 (CPYCQSEDTQVKDSRPAEDGAAIRRRRACPVC) fold into a zinc finger. An ATP-cone domain is found at 49-139 (LVVVKRTGRK…VYRNFREAKD (91 aa)).

The protein belongs to the NrdR family. Zn(2+) is required as a cofactor.

Negatively regulates transcription of bacterial ribonucleotide reductase nrd genes and operons by binding to NrdR-boxes. The chain is Transcriptional repressor NrdR from Chelativorans sp. (strain BNC1).